The following is a 79-amino-acid chain: Pulmonary surfactant-associated protein B (79 aa).

The Saposin B-type domain maps to 4–79 (PLPFCWLCRT…VCGLVLRCSS (76 aa)). Intrachain disulfides connect C8-C77, C11-C71, and C35-C46.

Homodimer; disulfide-linked.

It localises to the secreted. It is found in the extracellular space. The protein localises to the surface film. In terms of biological role, pulmonary surfactant-associated proteins promote alveolar stability by lowering the surface tension at the air-liquid interface in the peripheral air spaces. SP-B increases the collapse pressure of palmitic acid to nearly 70 millinewtons per meter. The sequence is that of Pulmonary surfactant-associated protein B (SFTPB) from Sus scrofa (Pig).